Here is a 347-residue protein sequence, read N- to C-terminus: NADH-ubiquinone oxidoreductase chain 2 (347 aa).

Transmembrane regions (helical) follow at residues 1-21 (MNPLIFSIITFTMMLGTGIVM), 25-45 (HWLTMWIGFEMNMLAIIPILM), 59-79 (YFLTQATASMLLMLAVTINLV), 96-116 (IILTLAMAMKLGLSPFHFWVP), 122-142 (VHLPSGLILLTWQKLAPMSVL), 148-168 (MINLDLMFTMSILSIAIGGWG), 200-220 (MALLNLTIYIILTTTTFLTFM), 240-260 (ITTIILVTMLSLGGLPPLSGF), 274-294 (NSIIAPTTMAITALLNLFFYM), and 325-345 (LLSPLTILSTMILPLSPMLML).

The protein belongs to the complex I subunit 2 family. Core subunit of respiratory chain NADH dehydrogenase (Complex I) which is composed of 45 different subunits. Interacts with TMEM242.

It is found in the mitochondrion inner membrane. The catalysed reaction is a ubiquinone + NADH + 5 H(+)(in) = a ubiquinol + NAD(+) + 4 H(+)(out). Its function is as follows. Core subunit of the mitochondrial membrane respiratory chain NADH dehydrogenase (Complex I) which catalyzes electron transfer from NADH through the respiratory chain, using ubiquinone as an electron acceptor. Essential for the catalytic activity and assembly of complex I. The chain is NADH-ubiquinone oxidoreductase chain 2 from Thoopterus nigrescens (Swift fruit bat).